A 1071-amino-acid polypeptide reads, in one-letter code: Tricorn protease (1071 aa).

Positions 39–310 are six-bladed beta propeller; that stretch reads MPNLLLNPDI…EKIEKIEIGD (272 aa). Residues 131-132 form a binds the substrate's C-terminus region; it reads RR. Residues 326 to 675 form a seven-bladed beta propeller region; the sequence is AEDFSPLDGD…EDERTVETDK (350 aa). The segment at 679-745 is C-1; helical bundle; sequence VSSIHEEFLQ…VEMQGEYRTS (67 aa). Histidine 746 serves as the catalytic Charge relay system. Residues 761–855 are PDZ-like; the sequence is RSGRIACDFK…DLMIDILDDD (95 aa). The tract at residues 856-1061 is C-2; alpha-beta sandwich; that stretch reads RFIRYRSWVE…IDALIEELRN (206 aa). 916 to 918 provides a ligand contact to substrate; sequence GGG. Serine 965 functions as the Nucleophile in the catalytic mechanism. 993 to 995 provides a ligand contact to substrate; the sequence is GIT. Catalysis depends on glutamate 1023, which acts as the Charge relay system.

Belongs to the peptidase S41B family. In terms of assembly, part of the Tricorn proteolytic complex. Assembles to form a hexameric toroid, 20 copies of which may then assemble to form an icosahedral supermolecule of 14.6 MDa.

It is found in the cytoplasm. Its function is as follows. Tricorn degrades oligopeptides (probably derived from the proteasome) and channels the products to F1, F2 and F3 proteases, which then catalyze the terminal degradation step, yielding free amino acids. The polypeptide is Tricorn protease (tri) (Thermoplasma acidophilum (strain ATCC 25905 / DSM 1728 / JCM 9062 / NBRC 15155 / AMRC-C165)).